The primary structure comprises 431 residues: Tol-Pal system protein TolB (431 aa).

A signal peptide spans 1–26 (MRLMTKLGFRALVASCLIAAGGAANA). The disordered stretch occupies residues 411–431 (PQILSVQGGSVREPSWGPFMQ).

It belongs to the TolB family. As to quaternary structure, the Tol-Pal system is composed of five core proteins: the inner membrane proteins TolA, TolQ and TolR, the periplasmic protein TolB and the outer membrane protein Pal. They form a network linking the inner and outer membranes and the peptidoglycan layer.

The protein resides in the periplasm. Part of the Tol-Pal system, which plays a role in outer membrane invagination during cell division and is important for maintaining outer membrane integrity. The chain is Tol-Pal system protein TolB from Burkholderia ambifaria (strain MC40-6).